A 336-amino-acid chain; its full sequence is Glycerol-3-phosphate dehydrogenase [NAD(P)+] (336 aa).

Residues Ser-16, Tyr-17, His-37, and Lys-111 each coordinate NADPH. Sn-glycerol 3-phosphate contacts are provided by Lys-111, Gly-140, and Thr-142. An NADPH-binding site is contributed by Ala-144. Positions 196, 249, 259, 260, and 261 each coordinate sn-glycerol 3-phosphate. Lys-196 acts as the Proton acceptor in catalysis. An NADPH-binding site is contributed by Arg-260. Residues Val-284 and Glu-286 each coordinate NADPH.

It belongs to the NAD-dependent glycerol-3-phosphate dehydrogenase family.

Its subcellular location is the cytoplasm. The enzyme catalyses sn-glycerol 3-phosphate + NAD(+) = dihydroxyacetone phosphate + NADH + H(+). It catalyses the reaction sn-glycerol 3-phosphate + NADP(+) = dihydroxyacetone phosphate + NADPH + H(+). It participates in membrane lipid metabolism; glycerophospholipid metabolism. Functionally, catalyzes the reduction of the glycolytic intermediate dihydroxyacetone phosphate (DHAP) to sn-glycerol 3-phosphate (G3P), the key precursor for phospholipid synthesis. The polypeptide is Glycerol-3-phosphate dehydrogenase [NAD(P)+] (Haemophilus ducreyi (strain 35000HP / ATCC 700724)).